We begin with the raw amino-acid sequence, 352 residues long: Molybdenum import ATP-binding protein ModC (352 aa).

In terms of domain architecture, ABC transporter spans 1–229 (MLQLDFHQQL…SALRPWLPKD (229 aa)). Position 31–38 (31–38 (GVSGAGKT)) interacts with ATP. The Mop domain maps to 289-352 (KSSIRNVLRA…AQIKSVSITA (64 aa)).

Belongs to the ABC transporter superfamily. Molybdate importer (TC 3.A.1.8) family. In terms of assembly, the complex is composed of two ATP-binding proteins (ModC), two transmembrane proteins (ModB) and a solute-binding protein (ModA).

The protein localises to the cell inner membrane. It carries out the reaction molybdate(out) + ATP + H2O = molybdate(in) + ADP + phosphate + H(+). Its function is as follows. Part of the ABC transporter complex ModABC involved in molybdenum import. Responsible for energy coupling to the transport system. The chain is Molybdenum import ATP-binding protein ModC from Pectobacterium atrosepticum (strain SCRI 1043 / ATCC BAA-672) (Erwinia carotovora subsp. atroseptica).